The chain runs to 2299 residues: Protein Ycf2 (2299 aa).

1642-1649 contacts ATP; sequence GSIGTGRS.

This sequence belongs to the Ycf2 family.

The protein resides in the plastid. The protein localises to the chloroplast stroma. Its function is as follows. Probable ATPase of unknown function. Its presence in a non-photosynthetic plant (Epifagus virginiana) and experiments in tobacco indicate that it has an essential function which is probably not related to photosynthesis. The protein is Protein Ycf2 of Nandina domestica (Heavenly bamboo).